Here is a 155-residue protein sequence, read N- to C-terminus: Cytochrome c-type biogenesis protein CcmE (155 aa).

The Cytoplasmic portion of the chain corresponds to 1–7 (MTRKQKR). A helical; Signal-anchor for type II membrane protein transmembrane segment spans residues 8-28 (LVVIAGGMSFILAAVLLVMFA). Topologically, residues 29–155 (FSQSVAYFYM…GKGQEAKATP (127 aa)) are periplasmic. Residues H124 and Y128 each contribute to the heme site.

The protein belongs to the CcmE/CycJ family.

It is found in the cell inner membrane. Functionally, heme chaperone required for the biogenesis of c-type cytochromes. Transiently binds heme delivered by CcmC and transfers the heme to apo-cytochromes in a process facilitated by CcmF and CcmH. The polypeptide is Cytochrome c-type biogenesis protein CcmE (Rhizobium etli (strain ATCC 51251 / DSM 11541 / JCM 21823 / NBRC 15573 / CFN 42)).